We begin with the raw amino-acid sequence, 271 residues long: Thymidine kinase (271 aa).

ATP contacts are provided by residues 74-81 (GPMFAGKT) and 152-155 (DEAQ). Catalysis depends on E153, which acts as the Proton acceptor. Y184 provides a ligand contact to substrate. Zn(2+)-binding residues include C209 and C212. Y237 contacts substrate. C241 lines the Zn(2+) pocket.

This sequence belongs to the thymidine kinase family.

The catalysed reaction is thymidine + ATP = dTMP + ADP + H(+). In Oryza sativa subsp. japonica (Rice), this protein is Thymidine kinase (TK).